A 204-amino-acid chain; its full sequence is Large ribosomal subunit protein uL4 (204 aa).

The tract at residues 49-76 is disordered; that stretch reads KTKGISDVSGTTAKPYGQKRTGRARQGS.

It belongs to the universal ribosomal protein uL4 family. As to quaternary structure, part of the 50S ribosomal subunit.

In terms of biological role, one of the primary rRNA binding proteins, this protein initially binds near the 5'-end of the 23S rRNA. It is important during the early stages of 50S assembly. It makes multiple contacts with different domains of the 23S rRNA in the assembled 50S subunit and ribosome. Functionally, forms part of the polypeptide exit tunnel. This Wolbachia pipientis wMel protein is Large ribosomal subunit protein uL4.